The chain runs to 282 residues: sn-glycerol-3-phosphate transport system permease protein UgpE (282 aa).

6 helical membrane-spanning segments follow: residues 14–34, 86–106, 112–132, 136–156, 201–221, and 248–268; these read LMLI…FVAS, IAIA…IVFF, MAFF…RILP, VIVD…LMAS, IAAL…WPLL, and WNYV…VVVL. The ABC transmembrane type-1 domain maps to 78 to 269; sequence LFNTFVVAIA…IPPVAVVVLM (192 aa).

The protein belongs to the binding-protein-dependent transport system permease family. As to quaternary structure, the complex is composed of two ATP-binding proteins (UgpC), two transmembrane proteins (UgpA and UgpE) and a solute-binding protein (UgpB).

It localises to the cell inner membrane. Functionally, part of the ABC transporter complex UgpBAEC involved in sn-glycerol-3-phosphate (G3P) import. Probably responsible for the translocation of the substrate across the membrane. The protein is sn-glycerol-3-phosphate transport system permease protein UgpE (ugpE) of Rhizobium meliloti (strain 1021) (Ensifer meliloti).